The sequence spans 589 residues: Phenylalanine--tRNA ligase beta subunit (589 aa).

Residues 302–379 (LPYRKEMVRA…IAYGYNNIQM (78 aa)) form the B5 domain. 4 residues coordinate Mg(2+): aspartate 357, aspartate 363, glutamate 366, and aspartate 367.

This sequence belongs to the phenylalanyl-tRNA synthetase beta subunit family. Type 2 subfamily. In terms of assembly, heterotetramer; dimer of two heterodimers formed by FARSA and FARSB. It depends on Mg(2+) as a cofactor.

Its subcellular location is the cytoplasm. The catalysed reaction is tRNA(Phe) + L-phenylalanine + ATP = L-phenylalanyl-tRNA(Phe) + AMP + diphosphate + H(+). The sequence is that of Phenylalanine--tRNA ligase beta subunit (Farsb) from Mus musculus (Mouse).